The primary structure comprises 377 residues: NIF3-like protein 1 (377 aa).

N6-acetyllysine is present on Lys109. Residues 244-377 (LLLHTGMGRL…ETDRDPLQVV (134 aa)) form a mediates interaction with COPS2 region. The residue at position 255 (Thr255) is a Phosphothreonine. Ser259 is subject to Phosphoserine.

Belongs to the GTP cyclohydrolase I type 2/NIF3 family. In terms of assembly, homodimer. Interacts with COPS2. Interacts with THOC7.

The protein localises to the cytoplasm. It localises to the nucleus. In terms of biological role, may function as a transcriptional corepressor through its interaction with COPS2, negatively regulating the expression of genes involved in neuronal differentiation. The sequence is that of NIF3-like protein 1 from Homo sapiens (Human).